Here is a 233-residue protein sequence, read N- to C-terminus: Ribonuclease 3 (233 aa).

In terms of domain architecture, RNase III spans 9–136 (LQHFWEQFHL…IIGSVYLSGG (128 aa)). Residue E49 participates in Mg(2+) binding. D53 is a catalytic residue. D122 and E125 together coordinate Mg(2+). Residue E125 is part of the active site. Residues 162-231 (DSKSALQEFV…ARAALALLKV (70 aa)) enclose the DRBM domain.

Belongs to the ribonuclease III family. As to quaternary structure, homodimer. The cofactor is Mg(2+).

The protein resides in the cytoplasm. The catalysed reaction is Endonucleolytic cleavage to 5'-phosphomonoester.. Digests double-stranded RNA. Involved in the processing of primary rRNA transcript to yield the immediate precursors to the large and small rRNAs (23S and 16S). Processes some mRNAs, and tRNAs when they are encoded in the rRNA operon. Processes pre-crRNA and tracrRNA of type II CRISPR loci if present in the organism. This chain is Ribonuclease 3, found in Moorella thermoacetica (strain ATCC 39073 / JCM 9320).